The chain runs to 159 residues: NADH-quinone oxidoreductase subunit I (159 aa).

4Fe-4S ferredoxin-type domains follow at residues 51–80 (RRYE…IESD) and 90–119 (TRYD…EGPN). [4Fe-4S] cluster is bound by residues cysteine 60, cysteine 63, cysteine 66, cysteine 70, cysteine 99, cysteine 102, cysteine 105, and cysteine 109.

This sequence belongs to the complex I 23 kDa subunit family. NDH-1 is composed of 14 different subunits. Subunits NuoA, H, J, K, L, M, N constitute the membrane sector of the complex. It depends on [4Fe-4S] cluster as a cofactor.

The protein localises to the cell inner membrane. The enzyme catalyses a quinone + NADH + 5 H(+)(in) = a quinol + NAD(+) + 4 H(+)(out). In terms of biological role, NDH-1 shuttles electrons from NADH, via FMN and iron-sulfur (Fe-S) centers, to quinones in the respiratory chain. The immediate electron acceptor for the enzyme in this species is believed to be ubiquinone. Couples the redox reaction to proton translocation (for every two electrons transferred, four hydrogen ions are translocated across the cytoplasmic membrane), and thus conserves the redox energy in a proton gradient. The chain is NADH-quinone oxidoreductase subunit I from Rickettsia prowazekii (strain Madrid E).